Here is a 289-residue protein sequence, read N- to C-terminus: RING-H2 finger protein ATL29 (289 aa).

A helical transmembrane segment spans residues 25 to 45 (VILTVILLVFFFIGFFTLYFC). The RING-type; atypical zinc finger occupies 110–152 (CAICLLEFDGDHVLRLLTTCYHVFHQECIDLWFESHRTCPVCR). Positions 179–237 (TSDDEEDDHHRQQTTTQIDTWPSSGQTSSIKKEQNLPEKFSRSHSTGHSIVRNKPEEED) are disordered. The span at 191–207 (QTTTQIDTWPSSGQTSS) shows a compositional bias: polar residues. Residues 208–219 (IKKEQNLPEKFS) are compositionally biased toward basic and acidic residues.

The protein belongs to the RING-type zinc finger family. ATL subfamily.

Its subcellular location is the membrane. It carries out the reaction S-ubiquitinyl-[E2 ubiquitin-conjugating enzyme]-L-cysteine + [acceptor protein]-L-lysine = [E2 ubiquitin-conjugating enzyme]-L-cysteine + N(6)-ubiquitinyl-[acceptor protein]-L-lysine.. The protein operates within protein modification; protein ubiquitination. In Arabidopsis thaliana (Mouse-ear cress), this protein is RING-H2 finger protein ATL29 (ATL29).